We begin with the raw amino-acid sequence, 360 residues long: G-box-binding factor 2 (360 aa).

A compositionally biased stretch (polar residues) spans 1-16 (MGSNEEGNPTNNSDKP). 2 disordered regions span residues 1–26 (MGSN…EQSN) and 150–275 (KVGS…AETE). A compositionally biased stretch (low complexity) spans 164–184 (SQSSENDGSSNGSDGNTTGGE). Residues 198 to 208 (TGERPSSQNSL) are compositionally biased toward polar residues. Over residues 246–264 (NEKEVKREKRKQSNRESAR) the composition is skewed to basic and acidic residues. Residues 249-312 (EVKREKRKQS…EKLRLENEAI (64 aa)) enclose the bZIP domain. The basic motif stretch occupies residues 251–270 (KREKRKQSNRESARRSRLRK). Residues 277–312 (LSVKVDALVAENMSLRSKLGQLNNESEKLRLENEAI) form a leucine-zipper region. Residues 335 to 352 (NSVSGSKTVQHQLLNASP) show a composition bias toward polar residues. The disordered stretch occupies residues 335-360 (NSVSGSKTVQHQLLNASPITDPVAAS).

The protein belongs to the bZIP family. DNA-binding heterodimer. Interacts with GBF4. Interacts with BZIP16 and BZIP68. Found in both light and dark grown leaves.

It localises to the nucleus. Its function is as follows. Binds to the G-box motif (5'-CCACGTGG-3') of the rbcS-1A gene promoter. G-box and G-box-like motifs are cis-acting elements defined in promoters of certain plant genes which are regulated by such diverse stimuli as light-induction or hormone control. GBF2 is found to bind asymmetrically to the G-box. The chain is G-box-binding factor 2 (GBF2) from Arabidopsis thaliana (Mouse-ear cress).